The primary structure comprises 726 residues: Catalase-peroxidase (726 aa).

The disordered stretch occupies residues 1-33 (MSTTDDTHNTLSTGKCPFHQGGHDRSAGAGTAS). The segment at residues 105-226 (WHGAGTYRSI…LGATEMGLIY (122 aa)) is a cross-link (tryptophyl-tyrosyl-methioninium (Trp-Tyr) (with M-252)). His-106 functions as the Proton acceptor in the catalytic mechanism. The segment at residues 226–252 (YVNPEGPDHSGEPLSAAAAIRATFGNM) is a cross-link (tryptophyl-tyrosyl-methioninium (Tyr-Met) (with W-105)). Position 267 (His-267) interacts with heme b.

The protein belongs to the peroxidase family. Peroxidase/catalase subfamily. Homodimer or homotetramer. It depends on heme b as a cofactor. Formation of the three residue Trp-Tyr-Met cross-link is important for the catalase, but not the peroxidase activity of the enzyme.

It catalyses the reaction H2O2 + AH2 = A + 2 H2O. It carries out the reaction 2 H2O2 = O2 + 2 H2O. In terms of biological role, bifunctional enzyme with both catalase and broad-spectrum peroxidase activity. In Salmonella paratyphi B (strain ATCC BAA-1250 / SPB7), this protein is Catalase-peroxidase.